The following is a 297-amino-acid chain: 3-methyl-2-oxobutanoate hydroxymethyltransferase (297 aa).

Residues 1–12 (MSEQISEQSEQN) show a composition bias toward polar residues. The disordered stretch occupies residues 1-36 (MSEQISEQSEQNVYGACPPVPAGESSPSAASAPRTK). Residues 22–33 (AGESSPSAASAP) show a composition bias toward low complexity. Mg(2+) contacts are provided by D78 and D117. 3-methyl-2-oxobutanoate is bound by residues 78–79 (DS), D117, and K147. E149 contributes to the Mg(2+) binding site. Catalysis depends on E215, which acts as the Proton acceptor.

Belongs to the PanB family. In terms of assembly, homodecamer; pentamer of dimers. Mg(2+) serves as cofactor.

It localises to the cytoplasm. It catalyses the reaction 3-methyl-2-oxobutanoate + (6R)-5,10-methylene-5,6,7,8-tetrahydrofolate + H2O = 2-dehydropantoate + (6S)-5,6,7,8-tetrahydrofolate. Its pathway is cofactor biosynthesis; (R)-pantothenate biosynthesis; (R)-pantoate from 3-methyl-2-oxobutanoate: step 1/2. Functionally, catalyzes the reversible reaction in which hydroxymethyl group from 5,10-methylenetetrahydrofolate is transferred onto alpha-ketoisovalerate to form ketopantoate. The sequence is that of 3-methyl-2-oxobutanoate hydroxymethyltransferase from Mycobacterium ulcerans (strain Agy99).